A 131-amino-acid polypeptide reads, in one-letter code: Small ribosomal subunit protein uS8 (131 aa).

The protein belongs to the universal ribosomal protein uS8 family. In terms of assembly, part of the 30S ribosomal subunit. Contacts proteins S5 and S12.

Its function is as follows. One of the primary rRNA binding proteins, it binds directly to 16S rRNA central domain where it helps coordinate assembly of the platform of the 30S subunit. This is Small ribosomal subunit protein uS8 from Azobacteroides pseudotrichonymphae genomovar. CFP2.